The primary structure comprises 750 residues: Penicillin-binding protein 2x (750 aa).

The helical transmembrane segment at 29-49 (LSLLSVFVFAIFLVNFAVIIG) threads the bilayer. Catalysis depends on serine 337, which acts as the Acyl-ester intermediate. 2 consecutive PASTA domains span residues 632–691 (QQSP…ILSD) and 692–750 (KAEE…TLGD).

Belongs to the transpeptidase family.

It is found in the cell membrane. Functionally, a transpeptidase that forms peptide cross-links between adjacent glycan strands in cell wall peptidoglycan (PG). Part of the divisome machinery that synthesizes the septal cross wall. Beta-lactams inactivate the PBPs by acylating an essential serine residue in the active site of these proteins. This is Penicillin-binding protein 2x (pbpX) from Streptococcus pneumoniae serotype 4 (strain ATCC BAA-334 / TIGR4).